We begin with the raw amino-acid sequence, 432 residues long: G-protein coupled receptor 22 (432 aa).

Residues 1 to 45 (MCFSPVLEINMQSESNVTVRDDIEDIDTNMYQPLSYPLSFQVSLT) are Cytoplasmic-facing. The chain crosses the membrane as a helical span at residues 46-66 (GFLMLEIVLGLGSNLTVLVLY). Topologically, residues 67–85 (CMKSNLISSVSNIITMNLH) are extracellular. A helical transmembrane segment spans residues 86–106 (VLDVIICVGCIPLTIVILLLS). The Cytoplasmic portion of the chain corresponds to 107-115 (LERNTALIC). Residues 116–136 (CFHEACVSFASVSTAINVFAI) form a helical membrane-spanning segment. Residues 137-156 (TLDRYDISVKPANRILTMGR) lie on the Extracellular side of the membrane. The helical transmembrane segment at 157-177 (AVMLMTSIWIFSFFSFLIPFI) threads the bilayer. The Cytoplasmic segment spans residues 178–208 (EVNFFSLQSGNAWENKTLLCVSTSEYYTELG). Residues 209-229 (MYYHLLVQIPIFFFTVIVMLI) form a helical membrane-spanning segment. Residues 230-314 (TYTKILQALN…ERQKRVFKMS (85 aa)) are Extracellular-facing. The helical transmembrane segment at 315–335 (LLIISTFLLCWTPISVLNTTI) threads the bilayer. Over 336-348 (LCLGPSDLLVKLR) the chain is Cytoplasmic. A helical transmembrane segment spans residues 349–369 (LCFLVMAYGTTIFHPLLYAFT). At 370–432 (RQKFQKVLKS…KCLVPQVVTD (63 aa)) the chain is on the extracellular side.

Belongs to the G-protein coupled receptor 1 family. As to expression, abundant levels detected in the brain. High expression in the heart (at protein level). No detectable expression in other peripheral tissues.

It localises to the cell membrane. Functionally, orphan G-protein coupled receptor. Seems to act through a G(i)/G(o) mediated pathway. May be involved in ciliogenesis. This chain is G-protein coupled receptor 22, found in Rattus norvegicus (Rat).